Reading from the N-terminus, the 253-residue chain is DNA repair protein RecO (253 aa).

The protein belongs to the RecO family.

Functionally, involved in DNA repair and RecF pathway recombination. This is DNA repair protein RecO from Nitrobacter hamburgensis (strain DSM 10229 / NCIMB 13809 / X14).